A 71-amino-acid chain; its full sequence is Conotoxin LvVIB (71 aa).

The signal sequence occupies residues 1–17 (VLIIAVLFLTASELVTA). A propeptide spanning residues 18–41 (DYTRDKWQYRAASLRDAMRNFRDT) is cleaved from the precursor. Cystine bridges form between C43–C57, C50–C62, and C56–C69.

It belongs to the conotoxin O1 superfamily. Expressed by the venom duct.

The protein localises to the secreted. In Conus lividus (Livid cone), this protein is Conotoxin LvVIB.